Here is a 315-residue protein sequence, read N- to C-terminus: DDRGK domain-containing protein 1 (315 aa).

Residues 1–28 (MVGPWVYLVAAVLLIGLILFLTRSRGRA) form a helical membrane-spanning segment. Positions 1–115 (MVGPWVYLVA…IEKPAEVHPT (115 aa)) are mediates interaction with CDK5RAP3. The Cytoplasmic portion of the chain corresponds to 29–315 (AAADGEPLHN…GQDLPAQASA (287 aa)). A disordered region spans residues 30 to 184 (AADGEPLHNE…ERKAQEEQAR (155 aa)). Positions 34 to 43 (EPLHNEEERA) are enriched in basic and acidic residues. At S73 the chain carries Phosphoserine. Residues 119-217 (GAKKLRKLEE…MTEEQSHSFL (99 aa)) form a mediates interaction with TRIP4 region. Positions 125-184 (KLEEKQARKAQREAEEAEREERKRLESQREAEWKKEEERLRLKEEQKEEEERKAQEEQAR) are enriched in basic and acidic residues. The UFM1-interacting motif (UFIM) signature appears at 196 to 210 (AFVVEEEGVSETMTE). Residues 217 to 315 (LTEFINYIKK…GQDLPAQASA (99 aa)) form a mediates interaction with UFL1 region. Residues 230–274 (VLLEDLAFQMGLRTQDAINRIQDLLTEGTLTGVIDDRGKFIYITP) enclose the PCI domain. A Glycyl lysine isopeptide (Lys-Gly) (interchain with G-Cter in UFM1) cross-link involves residue K268.

It belongs to the DDRGK1 family. As to quaternary structure, component of the UFM1 ribosome E3 ligase (UREL) complex, composed of UFL1, DDRGK1 and CDK5RAP3. Interacts with (unphosphorylated) ERN1/IRE1-alpha; interaction is dependent on UFM1 and takes place in response to endoplasmic reticulum stress, regulating ERN1/IRE1-alpha stability. Interacts with NFKBIA. Interacts with SOX9. In terms of processing, ufmylated; conjugated to ubiquitin-like protein UFM1, probably at Lys-268 by UFL1. The relevance of ufmylation is however unclear: as DDRGK1 acts as a substrate adapter for ufmylation, it is uncertain whether ufmylation is a collateral effect of the ufmylation process or whether it is required to regulate its activity. Post-translationally, ubiquitinated. Ubiquitination probably triggers proteasomal degradation and is negatively regulated by UFL1, the enzyme involved in the ufmylation of DDRGK1. Ubiquitously expressed. Higher expression in pancreatic islets, pancreatic acini and testis (at protein level). Highly expressed in the intestinal exocrine cells.

The protein resides in the endoplasmic reticulum membrane. Component of the UFM1 ribosome E3 ligase (UREL) complex, a multiprotein complex that catalyzes ufmylation of endoplasmic reticulum-docked proteins. The UREL complex plays a key role in ribosome recycling by mediating mono-ufmylation of the RPL26/uL24 subunit of the 60S ribosome following ribosome dissociation: ufmylation weakens the junction between post-termination 60S subunits and SEC61 translocons, promoting release and recycling of the large ribosomal subunit from the endoplasmic reticulum membrane. Ufmylation of RPL26/uL24 and subsequent 60S ribosome recycling either take place after normal termination of translation or after ribosome stalling during cotranslational translocation at the endoplasmic reticulum. Within the UREL complex, DDRGK1 tethers the complex to the endoplasmic reticulum membrane to restrict its activity to endoplasmic reticulum-docked ribosomes and acts as an ufmylation 'reader': following RPL26/uL24 ufmylation, DDRGK1 specifically binds to ufmylated RPL26/uL24 via its UFIM motif, resulting in stable association between the 60S ribosome and the UREL complex, followed by dissociation of the 60S ribosome subunit from the endoplasmic reticulum membrane. The UREL complex is also involved in reticulophagy in response to endoplasmic reticulum stress by promoting ufmylation of proteins such as CYB5R3 and RPN1, thereby promoting lysosomal degradation of ufmylated proteins. Ufmylation-dependent reticulophagy inhibits the unfolded protein response (UPR) by regulating ERN1/IRE1-alpha stability. Acts as a regulator of immunity by promoting differentiation of B-cells into plasma cells: acts by promoting expansion of the endoplasmic reticulum and regulating the unfolded protein response (UPR). May also be required for TRIP4 ufmylation. May play a role in NF-kappa-B-mediated transcription through regulation of the phosphorylation and the degradation of NFKBIA, the inhibitor of NF-kappa-B. Plays a role in cartilage development through SOX9, inhibiting the ubiquitin-mediated proteasomal degradation of this transcriptional regulator. Required for stabilization and ufmylation of ATG9A. The polypeptide is DDRGK domain-containing protein 1 (Mus musculus (Mouse)).